The primary structure comprises 305 residues: Deoxyhypusine hydroxylase (305 aa).

2 HEAT-like PBS-type repeats span residues L54 to D80 and V87 to D113. H56, H89, and E90 together coordinate Fe cation. The segment at E137–K160 is disordered. HEAT-like PBS-type repeat units lie at residues D178–C204, F209–K235, and V242–D268. Fe cation-binding residues include H211, H244, and E245.

The protein belongs to the deoxyhypusine hydroxylase family. Fe(2+) serves as cofactor.

It carries out the reaction [eIF5A protein]-deoxyhypusine + AH2 + O2 = [eIF5A protein]-hypusine + A + H2O. It functions in the pathway protein modification; eIF5A hypusination. Functionally, catalyzes the hydroxylation of the N(6)-(4-aminobutyl)-L-lysine intermediate produced by deoxyhypusine synthase/DHPS on a critical lysine of the eukaryotic translation initiation factor 5A/eIF-5A. This is the second step of the post-translational modification of that lysine into an unusual amino acid residue named hypusine. Hypusination is unique to mature eIF-5A factor and is essential for its function. This chain is Deoxyhypusine hydroxylase (dohh), found in Danio rerio (Zebrafish).